Reading from the N-terminus, the 561-residue chain is uncharacterized protein (561 aa).

2 helical membrane-spanning segments follow: residues 29–49 (FIFNVGSLTPTTAVLGVKKII) and 80–100 (FLFHTVGFFPIYTSTIGAVVI).

The protein resides in the cell membrane. This is an uncharacterized protein from Mycoplasma pneumoniae (strain ATCC 29342 / M129 / Subtype 1) (Mycoplasmoides pneumoniae).